The following is a 419-amino-acid chain: S-adenosylmethionine synthase (419 aa).

Residue His15 participates in ATP binding. Asp17 provides a ligand contact to Mg(2+). K(+) is bound at residue Glu43. The L-methionine site is built by Glu56 and Gln100. The tract at residues 100–110 (QSPDIAQGVNE) is flexible loop. ATP-binding positions include 171–173 (DGK), 248–249 (KF), Asp257, 263–264 (RK), Ala280, and Lys284. Asp257 serves as a coordination point for L-methionine. Lys288 is an L-methionine binding site.

It belongs to the AdoMet synthase family. In terms of assembly, homotetramer; dimer of dimers. The cofactor is Mg(2+). Requires K(+) as cofactor.

The protein localises to the cytoplasm. The catalysed reaction is L-methionine + ATP + H2O = S-adenosyl-L-methionine + phosphate + diphosphate. The protein operates within amino-acid biosynthesis; S-adenosyl-L-methionine biosynthesis; S-adenosyl-L-methionine from L-methionine: step 1/1. Functionally, catalyzes the formation of S-adenosylmethionine (AdoMet) from methionine and ATP. The overall synthetic reaction is composed of two sequential steps, AdoMet formation and the subsequent tripolyphosphate hydrolysis which occurs prior to release of AdoMet from the enzyme. This chain is S-adenosylmethionine synthase, found in Prochlorococcus marinus (strain MIT 9313).